The primary structure comprises 398 residues: Acetate kinase (398 aa).

A Mg(2+)-binding site is contributed by Asn7. Lys14 is an ATP binding site. Arg96 contacts substrate. The Proton donor/acceptor role is filled by Asp153. Residues 210-214 (HLGNG), 284-286 (DLR), and 332-336 (GIGEH) each bind ATP. Glu385 contributes to the Mg(2+) binding site.

Belongs to the acetokinase family. In terms of assembly, homodimer. Requires Mg(2+) as cofactor. It depends on Mn(2+) as a cofactor.

The protein resides in the cytoplasm. The enzyme catalyses acetate + ATP = acetyl phosphate + ADP. It participates in metabolic intermediate biosynthesis; acetyl-CoA biosynthesis; acetyl-CoA from acetate: step 1/2. In terms of biological role, catalyzes the formation of acetyl phosphate from acetate and ATP. Can also catalyze the reverse reaction. The protein is Acetate kinase of Acaryochloris marina (strain MBIC 11017).